A 339-amino-acid chain; its full sequence is MARIIALDGAQGEGGGQILRSALSLSMITGQPFEMSDIRAGRAKPGLLRQHLTAVRAATEICGAQVNGDELGSQQLRFTPGPIRGGEYRFAIGSAGSCMLVLQTVLPALWFADGSSRVEVHGGTHNQAAPSADFICRVWEPLLARMGISQRTTLIKHGFYPAGGGAAATVVEPATSLRGLTLISRGETLRTTAEALLAAVPYHVGEREVATLEAHFPLAEKNVVALEGGCGPGNALLLMIQSEQLTELFAAFGVKGTSAEAVANQVAHEARRYLASPAAVGEHLADQLILPLALAGEGAFTVARASAHLLTNIAVVERFLPVRFSCEATESGYLVRVSD.

ATP contacts are provided by residues Gln-103 and 283–287 (HLADQ). His-308 (tele-AMP-histidine intermediate) is an active-site residue.

Belongs to the RNA 3'-terminal cyclase family. Type 1 subfamily.

The protein resides in the cytoplasm. It catalyses the reaction a 3'-end 3'-phospho-ribonucleotide-RNA + ATP = a 3'-end 2',3'-cyclophospho-ribonucleotide-RNA + AMP + diphosphate. Catalyzes the conversion of 3'-phosphate to a 2',3'-cyclic phosphodiester at the end of RNA. The mechanism of action of the enzyme occurs in 3 steps: (A) adenylation of the enzyme by ATP; (B) transfer of adenylate to an RNA-N3'P to produce RNA-N3'PP5'A; (C) and attack of the adjacent 2'-hydroxyl on the 3'-phosphorus in the diester linkage to produce the cyclic end product. The biological role of this enzyme is unknown but it is likely to function in some aspects of cellular RNA processing. The polypeptide is RNA 3'-terminal phosphate cyclase (Salmonella enteritidis PT4 (strain P125109)).